The following is a 427-amino-acid chain: Enolase (427 aa).

(2R)-2-phosphoglycerate is bound at residue Q163. E205 functions as the Proton donor in the catalytic mechanism. Positions 242, 285, and 312 each coordinate Mg(2+). Residues K337, R366, S367, and K388 each coordinate (2R)-2-phosphoglycerate. The active-site Proton acceptor is K337.

Belongs to the enolase family. Mg(2+) serves as cofactor.

The protein localises to the cytoplasm. Its subcellular location is the secreted. It localises to the cell surface. It carries out the reaction (2R)-2-phosphoglycerate = phosphoenolpyruvate + H2O. Its pathway is carbohydrate degradation; glycolysis; pyruvate from D-glyceraldehyde 3-phosphate: step 4/5. Its function is as follows. Catalyzes the reversible conversion of 2-phosphoglycerate (2-PG) into phosphoenolpyruvate (PEP). It is essential for the degradation of carbohydrates via glycolysis. This is Enolase from Burkholderia mallei (strain NCTC 10247).